A 206-amino-acid polypeptide reads, in one-letter code: Endoplasmic reticulum transmembrane protein 1 (206 aa).

The Lumenal segment spans residues 1 to 7 (MSLYFTT). A helical transmembrane segment spans residues 8–28 (LFLLLTVEMVMLFIFVLPLPF). Residues 29–45 (RIRRGIFSTYNQLTAKQ) are Cytoplasmic-facing. The chain crosses the membrane as a helical span at residues 46–66 (QIKTIIFITGCLVGLLFIDSW). Over 67–104 (KRSQIRVSLYHNDNSGSIGSSAVTPIQALASRAYNQRN) the chain is Lumenal. Residues 105–125 (MYISGFILYFSICIPTVMSIV) traverse the membrane as a helical segment. At 126 to 206 (KRLVKYQGLI…AAAEASKKGN (81 aa)) the chain is on the cytoplasmic side. Residues 140 to 163 (KQKLNKPSSNSKKDSNEADSTKLQ) are disordered. A compositionally biased stretch (basic and acidic residues) spans 150-163 (SKKDSNEADSTKLQ). A Glycyl lysine isopeptide (Lys-Gly) (interchain with G-Cter in ubiquitin) cross-link involves residue lysine 190. The short motif at 203–206 (KKGN) is the Di-lysine motif element.

The protein belongs to the BCAP29/BCAP31 family.

Its subcellular location is the endoplasmic reticulum membrane. May play a role in anterograde transport of membrane proteins from the endoplasmic reticulum to the Golgi. The chain is Endoplasmic reticulum transmembrane protein 1 (YET1) from Saccharomyces cerevisiae (strain ATCC 204508 / S288c) (Baker's yeast).